The primary structure comprises 84 residues: Envelope small membrane protein (84 aa).

Residues 1–18 (MFMADAYLADTVWYVGQI) lie on the Virion surface side of the membrane. The chain crosses the membrane as a helical span at residues 19-39 (IFIVAICLLVIIVVVAFLATF). Over 40–80 (KLCIQLCGMCNTLVLSPSIYVFNRGRQFYEFYNDVKPPVLD) the chain is Intravirion.

It belongs to the betacoronaviruses E protein family. As to quaternary structure, homopentamer. Interacts with membrane protein M in the budding compartment of the host cell, which is located between endoplasmic reticulum and the Golgi complex. Interacts with Nucleoprotein.

It is found in the host Golgi apparatus membrane. In terms of biological role, plays a central role in virus morphogenesis and assembly. Acts as a viroporin and self-assembles in host membranes forming pentameric protein-lipid pores that allow ion transport. Also plays a role in the induction of apoptosis. This Porcine hemagglutinating encephalomyelitis virus (strain 67N) (HEV-67N) protein is Envelope small membrane protein.